We begin with the raw amino-acid sequence, 433 residues long: MHSLVKPVLFFVVVRIVQYAIISLSPNKQFDLSTNLLLAKYCSEQETQQFWHRHLFNKLLSWDSVFFIKTAMTMDGYPEYEHEWAFSVIWSSLIRSVSPSNNFYTVLKTAVILENLIYFMAMITLFYLTRITFGKLDKSKTHLSDKLATFTAILFSCNSGSGFFTGPYSEPLSFLFSFLGILAREFSVTPIIPYGLEFKSSKIFYYTIVSSFCFTIATLNRSNCILLGFYYVFDSIYLIRRQKYKKALLFPVLAGCIVALFFVRQQFYIPYKNFCELRGEWCNESLINFKPLHFLTRKSLYSYIQSEHWNLGLFNYWTPNNIPNFLFGLPTFVILFSSTFYFSRVYPNYKLKPLIFITRAFTIIILLFAHVQIINRISTFIPLHLWYISDRFVKFEANKKMTGDDWIVKGYIYWLIFWVPIQTSLFVFFLPPA.

The next 9 helical transmembrane spans lie at 4-24 (LVKP…IISL), 109-129 (TAVI…FYLT), 148-165 (ATFT…GFFT), 172-194 (LSFL…IIPY), 204-226 (FYYT…NCIL), 247-267 (ALLF…RQQF), 322-342 (IPNF…TFYF), 354-374 (LIFI…VQII), and 410-430 (GYIY…VFFL).

It belongs to the PIGV family.

It localises to the endoplasmic reticulum membrane. Its pathway is glycolipid biosynthesis; glycosylphosphatidylinositol-anchor biosynthesis. Its function is as follows. Mannosyltransferase involved in glycosylphosphatidylinositol-anchor biosynthesis. Transfers the second mannose to the glycosylphosphatidylinositol during GPI precursor assembly. In Candida glabrata (strain ATCC 2001 / BCRC 20586 / JCM 3761 / NBRC 0622 / NRRL Y-65 / CBS 138) (Yeast), this protein is GPI mannosyltransferase 2 (GPI18).